We begin with the raw amino-acid sequence, 528 residues long: Peptide chain release factor 3 (528 aa).

The region spanning serine 11–glutamine 279 is the tr-type G domain. Residues serine 20–threonine 27, aspartate 88–histidine 92, and asparagine 142–aspartate 145 each bind GTP.

This sequence belongs to the TRAFAC class translation factor GTPase superfamily. Classic translation factor GTPase family. PrfC subfamily.

The protein localises to the cytoplasm. In terms of biological role, increases the formation of ribosomal termination complexes and stimulates activities of RF-1 and RF-2. It binds guanine nucleotides and has strong preference for UGA stop codons. It may interact directly with the ribosome. The stimulation of RF-1 and RF-2 is significantly reduced by GTP and GDP, but not by GMP. The chain is Peptide chain release factor 3 from Pseudoalteromonas atlantica (strain T6c / ATCC BAA-1087).